The primary structure comprises 339 residues: Phosphoribosylformylglycinamidine cyclo-ligase (339 aa).

Belongs to the AIR synthase family.

Its subcellular location is the cytoplasm. The enzyme catalyses 2-formamido-N(1)-(5-O-phospho-beta-D-ribosyl)acetamidine + ATP = 5-amino-1-(5-phospho-beta-D-ribosyl)imidazole + ADP + phosphate + H(+). It functions in the pathway purine metabolism; IMP biosynthesis via de novo pathway; 5-amino-1-(5-phospho-D-ribosyl)imidazole from N(2)-formyl-N(1)-(5-phospho-D-ribosyl)glycinamide: step 2/2. In Desulfitobacterium hafniense (strain DSM 10664 / DCB-2), this protein is Phosphoribosylformylglycinamidine cyclo-ligase.